An 875-amino-acid polypeptide reads, in one-letter code: Cell surface glycoprotein (875 aa).

The first 23 residues, 1–23 (MTNTKQKINAVFLSALMVMSVFA), serve as a signal peptide directing secretion. Residues 137-157 (EVQNGGSGDVTGSTLQTSSSG) are compositionally biased toward polar residues. Disordered regions lie at residues 137–158 (EVQN…SSGP) and 197–217 (LPTA…DFDV). Over residues 205–216 (DNGASGSNGDFD) the composition is skewed to low complexity. Asn253 is a glycosylation site (N-linked (GlcNAc...) asparagine). The disordered stretch occupies residues 380-414 (YPASDSSNDGYASGGSHASSVTVRDTDGDGTDDSE). Positions 383–402 (SDSSNDGYASGGSHASSVTV) are enriched in polar residues. 4 N-linked (GlcNAc...) asparagine glycosylation sites follow: Asn455, Asn563, Asn715, and Asn774. Positions 794–852 (EAGSLEEEQPDTETPEPDTETPEPDTETPEPDTETPEPDTETPEPDTETEEATTEASGP) are disordered. Positions 797–846 (SLEEEQPDTETPEPDTETPEPDTETPEPDTETPEPDTETPEPDTETEEAT) are enriched in acidic residues. Residues 851 to 875 (GPGFTAAIALIALVAAALLAVRRDN) traverse the membrane as a helical segment. The PGF sorting signal signature appears at 852 to 854 (PGF).

It belongs to the halobacterial S-layer protein family. In terms of processing, asn-455 is glycosylated by a pentasaccharide comprising a hexose, 2 hexuronic acids, a methyl ester of a hexuronic acid and a final hexose. The complete pentasaccharide is first assembled on dolichol phosphate and then transferred the glycan to the target Asn. Post-translationally, cleaved by the archaeosortase ArtA at the C-terminus, with removal of a short hydrophobic segment. Lipidation.

It is found in the secreted. The protein resides in the cell wall. Its subcellular location is the S-layer. It localises to the cell membrane. In terms of biological role, S-layer protein. The S-layer is a paracrystalline mono-layered assembly of proteins which coat the surface of the cell. This is Cell surface glycoprotein (csg1) from Haloarcula marismortui (strain ATCC 43049 / DSM 3752 / JCM 8966 / VKM B-1809) (Halobacterium marismortui).